The chain runs to 251 residues: Hydroxyacylglutathione hydrolase (251 aa).

Positions 53, 55, 57, 58, 110, 127, and 165 each coordinate Zn(2+).

It belongs to the metallo-beta-lactamase superfamily. Glyoxalase II family. As to quaternary structure, monomer. It depends on Zn(2+) as a cofactor.

It catalyses the reaction an S-(2-hydroxyacyl)glutathione + H2O = a 2-hydroxy carboxylate + glutathione + H(+). It participates in secondary metabolite metabolism; methylglyoxal degradation; (R)-lactate from methylglyoxal: step 2/2. Its function is as follows. Thiolesterase that catalyzes the hydrolysis of S-D-lactoyl-glutathione to form glutathione and D-lactic acid. The polypeptide is Hydroxyacylglutathione hydrolase (Yersinia pestis).